The chain runs to 277 residues: Shikimate dehydrogenase (NADP(+)) (277 aa).

Residues Ser15–Ser17 and Thr62 contribute to the shikimate site. Lys66 serves as the catalytic Proton acceptor. Residues Asn87 and Asp102 each coordinate shikimate. NADP(+) is bound by residues Gly127–Ala131, Asn151–Lys156, and Ile219. Tyr221 is a shikimate binding site. Gly242 serves as a coordination point for NADP(+).

It belongs to the shikimate dehydrogenase family. As to quaternary structure, homodimer.

It carries out the reaction shikimate + NADP(+) = 3-dehydroshikimate + NADPH + H(+). It functions in the pathway metabolic intermediate biosynthesis; chorismate biosynthesis; chorismate from D-erythrose 4-phosphate and phosphoenolpyruvate: step 4/7. Involved in the biosynthesis of the chorismate, which leads to the biosynthesis of aromatic amino acids. Catalyzes the reversible NADPH linked reduction of 3-dehydroshikimate (DHSA) to yield shikimate (SA). The protein is Shikimate dehydrogenase (NADP(+)) of Bacillus cereus (strain 03BB102).